Consider the following 668-residue polypeptide: Protein brown (668 aa).

Residues 1-412 (MPMDEGDAQG…TEDLANIRSG (412 aa)) lie on the Cytoplasmic side of the membrane. The 298-residue stretch at 31-328 (YSFWNECRKQ…FTEGFMQPKN (298 aa)) folds into the ABC transporter domain. Position 63 to 70 (63 to 70 (GGSGAGKT)) interacts with ATP. Residues 413–433 (LIGFGFFMTTAVTLSLMYSGV) traverse the membrane as a helical segment. Residues 434–453 (GGLTQRTVQDVGGSIFMLSN) lie on the Extracellular side of the membrane. Residues 454 to 474 (EMIFTFSYGVTYIFPAALPII) form a helical membrane-spanning segment. At 475–490 (RREVAEGTYSLSAYYV) the chain is on the cytoplasmic side. Residues 491–511 (ALVLSFVPVAFFKGYMFLSVI) form a helical membrane-spanning segment. Topologically, residues 512–524 (YASIYYTRGFLLY) are extracellular. The chain crosses the membrane as a helical span at residues 525-545 (ITMGFLMSLSAIAAVGYGVFL). The Cytoplasmic portion of the chain corresponds to 546 to 561 (SSLFETDKMASECAAP). The helical transmembrane segment at 562 to 582 (FDLIFLIFGGTYMNVDSVPLL) threads the bilayer. Topologically, residues 583–637 (KYFSLFFYSNEALMYNFWIDIDNIACXVNDEHPCCQTGLEVLQQASFRTADYTFW) are extracellular. A helical membrane pass occupies residues 638 to 658 (LDCASLLVVALVFHIVSFTLI). The Cytoplasmic portion of the chain corresponds to 659–668 (RRYINRSGYY).

Belongs to the ABC transporter superfamily. ABCG family. Eye pigment precursor importer (TC 3.A.1.204) subfamily. As to quaternary structure, may form a heterodimer with w/white. As to expression, expressed in eyes.

Its subcellular location is the membrane. It carries out the reaction guanine(out) + ATP + H2O = guanine(in) + ADP + phosphate + H(+). The catalysed reaction is riboflavin(in) + ATP + H2O = riboflavin(out) + ADP + phosphate + H(+). It catalyses the reaction (6S)-5,6,7,8-tetrahydrofolate(out) + ATP + H2O = (6S)-5,6,7,8-tetrahydrofolate(in) + ADP + phosphate + H(+). Functionally, ATP-dependent transporter of the ATP-binding cassette (ABC) family which transports various molecules including bioamines, neurotransmitters and metabolic intermediates. In the eye and probably in association with w/white, required for the transport of the eye red pigment precursor, guanine, into pigment cell granules. In Malpighian tubules, involved in guanine uptake. Probably in association with w/white, involved in aging-induced intestinal stem cell proliferation in the midgut by regulating tetrahydrofolate transport. The protein is Protein brown of Drosophila virilis (Fruit fly).